A 182-amino-acid chain; its full sequence is Probable nicotinate-nucleotide adenylyltransferase (182 aa).

Belongs to the NadD family.

It carries out the reaction nicotinate beta-D-ribonucleotide + ATP + H(+) = deamido-NAD(+) + diphosphate. It functions in the pathway cofactor biosynthesis; NAD(+) biosynthesis; deamido-NAD(+) from nicotinate D-ribonucleotide: step 1/1. In terms of biological role, catalyzes the reversible adenylation of nicotinate mononucleotide (NaMN) to nicotinic acid adenine dinucleotide (NaAD). This chain is Probable nicotinate-nucleotide adenylyltransferase, found in Sulfurimonas denitrificans (strain ATCC 33889 / DSM 1251) (Thiomicrospira denitrificans (strain ATCC 33889 / DSM 1251)).